A 258-amino-acid polypeptide reads, in one-letter code: Phosphate import ATP-binding protein PstB 3 (258 aa).

Residues 10–253 (MTARSLAVHY…PANSLTQGYI (244 aa)) enclose the ABC transporter domain. 42–49 (GPSGCGKS) is a binding site for ATP.

Belongs to the ABC transporter superfamily. Phosphate importer (TC 3.A.1.7) family. The complex is composed of two ATP-binding proteins (PstB), two transmembrane proteins (PstC and PstA) and a solute-binding protein (PstS).

Its subcellular location is the cell inner membrane. The catalysed reaction is phosphate(out) + ATP + H2O = ADP + 2 phosphate(in) + H(+). Part of the ABC transporter complex PstSACB involved in phosphate import. Responsible for energy coupling to the transport system. The sequence is that of Phosphate import ATP-binding protein PstB 3 from Paramagnetospirillum magneticum (strain ATCC 700264 / AMB-1) (Magnetospirillum magneticum).